Here is a 1545-residue protein sequence, read N- to C-terminus: Dual oxidase 2 (1545 aa).

Positions 1 to 25 are cleaved as a signal peptide; the sequence is MLCIRPEALVLLGALLTVPLDPVGG. The Extracellular portion of the chain corresponds to 26–601; the sequence is QDALSLTWEV…EGSGPGFGIT (576 aa). The tract at residues 30–596 is peroxidase-like; mediates peroxidase activity; that stretch reads SLTWEVQRYD…VIQYFEGSGP (567 aa). Asn100, Asn312, Asn348, Asn358, Asn455, and Asn549 each carry an N-linked (GlcNAc...) asparagine glycan. Cys124 and Cys1159 are oxidised to a cystine. A helical membrane pass occupies residues 602 to 622; that stretch reads IVALCCLPLMSLLISGVVAYF. At 623–1037 the chain is on the cytoplasmic side; sequence RSRERKKLQK…YKRFVENYRR (415 aa). EF-hand domains are found at residues 819–854, 855–890, and 899–934; these read PQDM…FMKG, SPED…FIEI, and QLTE…HDSE. 9 residues coordinate Ca(2+): Asp832, Asp834, Asn836, Tyr838, Glu843, Asp868, Asp870, Asn872, and Glu879. The interval 960-1242 is interaction with TXNDC11; that stretch reads RVSFIIRTPE…GSFALIQLPR (283 aa). A helical membrane pass occupies residues 1038–1058; that stretch reads HIVCVAIFSAICAGLFVERAY. The Extracellular segment spans residues 1059–1074; sequence YYAFVSPPSGIAETTF. The helical transmembrane segment at 1075 to 1097 threads the bilayer; sequence VGIILSRGTAASVSFMFSYILLT. Residues 1081–1263 enclose the Ferric oxidoreductase domain; it reads RGTAASVSFM…YVGDKLVSLS (183 aa). The Cytoplasmic portion of the chain corresponds to 1098–1125; that stretch reads MCRNLITFLRETFLNHYVPFDAAVDFHR. A helical transmembrane segment spans residues 1126–1148; that stretch reads WIAMAALVLAILHSVGHVVNVYI. Residues 1149-1182 lie on the Extracellular side of the membrane; the sequence is FSVSPLSLLACVFPSVFVNDGSKLPQKFYWWFFQ. Residues 1183–1203 form a helical membrane-spanning segment; it reads TIPGMTGVLLLVVLAIMYVFA. The Cytoplasmic portion of the chain corresponds to 1204–1220; it reads SPYFRRRSFRGFWLTHH. A helical membrane pass occupies residues 1221-1241; that stretch reads FYILLYVLLIIHGSFALIQLP. Arg1242 is a topological domain (extracellular). Residues 1243-1263 traverse the membrane as a helical segment; that stretch reads FHIFFLVPALIYVGDKLVSLS. Residues 1264-1370 enclose the FAD-binding FR-type domain; sequence RKKVEISVVK…DGPFGEGHQE (107 aa). The Cytoplasmic segment spans residues 1264–1545; it reads RKKVEISVVK…THFVHHYENF (282 aa).

The protein in the N-terminal section; belongs to the peroxidase family. In terms of assembly, heterodimer with DUOXA2; disulfide-linked. Interacts with TXNDC11, TPO and CYBA. N-glycosylated. Expressed in thyroid, and the digestive tract especially in stomach, cecum and sigmoidal colon (at protein level). Expressed in thyroid.

It localises to the apical cell membrane. The protein resides in the cell junction. The catalysed reaction is NADH + O2 + H(+) = H2O2 + NAD(+). It catalyses the reaction NADPH + O2 + H(+) = H2O2 + NADP(+). The protein operates within hormone biosynthesis; thyroid hormone biosynthesis. Its activity is regulated as follows. The NADPH oxidase activity is calcium-dependent. Peroxidase activity is inhibited by aminobenzohydrazide. In terms of biological role, generates hydrogen peroxide which is required for the activity of thyroid peroxidase/TPO and lactoperoxidase/LPO. Plays a role in thyroid hormones synthesis and lactoperoxidase-mediated antimicrobial defense at the surface of mucosa. May have its own peroxidase activity through its N-terminal peroxidase-like domain. This Sus scrofa (Pig) protein is Dual oxidase 2 (DUOX2).